A 142-amino-acid polypeptide reads, in one-letter code: 3-hydroxyacyl-[acyl-carrier-protein] dehydratase FabZ (142 aa).

His48 is an active-site residue.

It belongs to the thioester dehydratase family. FabZ subfamily.

The protein resides in the cytoplasm. It carries out the reaction a (3R)-hydroxyacyl-[ACP] = a (2E)-enoyl-[ACP] + H2O. Functionally, involved in unsaturated fatty acids biosynthesis. Catalyzes the dehydration of short chain beta-hydroxyacyl-ACPs and long chain saturated and unsaturated beta-hydroxyacyl-ACPs. This chain is 3-hydroxyacyl-[acyl-carrier-protein] dehydratase FabZ, found in Natranaerobius thermophilus (strain ATCC BAA-1301 / DSM 18059 / JW/NM-WN-LF).